We begin with the raw amino-acid sequence, 164 residues long: Thiol peroxidase (164 aa).

The Thioredoxin domain maps to 16-162 (LQVGDIAKDF…YEAAINAAKI (147 aa)). Cysteine 58 (cysteine sulfenic acid (-SOH) intermediate) is an active-site residue. Cysteine 58 and cysteine 92 are joined by a disulfide.

Belongs to the peroxiredoxin family. Tpx subfamily. In terms of assembly, homodimer.

The enzyme catalyses a hydroperoxide + [thioredoxin]-dithiol = an alcohol + [thioredoxin]-disulfide + H2O. In terms of biological role, thiol-specific peroxidase that catalyzes the reduction of hydrogen peroxide and organic hydroperoxides to water and alcohols, respectively. Plays a role in cell protection against oxidative stress by detoxifying peroxides. In Streptococcus agalactiae serotype V (strain ATCC BAA-611 / 2603 V/R), this protein is Thiol peroxidase.